Here is a 123-residue protein sequence, read N- to C-terminus: MSVQILGKGKKVALKRRHARLRKHISGTPELPRLVVTRSNRHMVAQIIDDTKGVTLVSESTLTSDFAGFEGTKTEAAKKVGELIAKKAQDAGITAVVFDRGGNKYHGRVAAVAEGAREGGLAL.

The protein belongs to the universal ribosomal protein uL18 family. In terms of assembly, part of the 50S ribosomal subunit; part of the 5S rRNA/L5/L18/L25 subcomplex. Contacts the 5S and 23S rRNAs.

This is one of the proteins that bind and probably mediate the attachment of the 5S RNA into the large ribosomal subunit, where it forms part of the central protuberance. This is Large ribosomal subunit protein uL18 from Bifidobacterium adolescentis (strain ATCC 15703 / DSM 20083 / NCTC 11814 / E194a).